Consider the following 225-residue polypeptide: Ribosomal RNA large subunit methyltransferase E (225 aa).

S-adenosyl-L-methionine-binding residues include Gly76, Trp78, Asp99, Asp115, and Asp139. The active-site Proton acceptor is Lys179.

This sequence belongs to the class I-like SAM-binding methyltransferase superfamily. RNA methyltransferase RlmE family.

The protein resides in the cytoplasm. It catalyses the reaction uridine(2552) in 23S rRNA + S-adenosyl-L-methionine = 2'-O-methyluridine(2552) in 23S rRNA + S-adenosyl-L-homocysteine + H(+). In terms of biological role, specifically methylates the uridine in position 2552 of 23S rRNA at the 2'-O position of the ribose in the fully assembled 50S ribosomal subunit. The polypeptide is Ribosomal RNA large subunit methyltransferase E (Afipia carboxidovorans (strain ATCC 49405 / DSM 1227 / KCTC 32145 / OM5) (Oligotropha carboxidovorans)).